Reading from the N-terminus, the 668-residue chain is MGKIHELDNILANQIAAGEVIERPASIVKELVENSLDAHSHRVDIIVENSGLDSVRVIDDGDGIAAEDISLAFHRHATSKINSRHDLFKVQTMGFRGEALPSIASVADVTLTTAQAGQEEGTMIHLRGGKELVVKPAGARQGTDIKVTDLFFNTPARLKYLKSPQTELTRITDIINRLALANPAVAFSFTHNGRELFRSAGNNNLQQVVAAIYGVQAGRKMLEISGADDDFKVSGFVSLPELTRASRQYITITINHRYIRNFELTKAIIQGYESKLMVGRYPIAVINIDLDPVLVDVNVHPAKREVRLSKEQQLIKLIAETIRQRIAVENLIPDVDADQFIPNDDEVADLDRRLKEASPVYHAAPISAVPATEKAATEIPTPEADNPAHADALDSEIPAPIVIHHLEDLNTPAMQKFDERYQNEGEVTPFSAPVPTMTKKPVKPANIELDVHDKQDQQQNRFPDLQYIGQLQGTFLLAQAGDGLYIVDQHAAQERINYEYYRQKIGEVSADQQNFLVPLVLNYSTVDAMTINQHLDTLAAVGLELESFGQNSFILRSHPTWFKEGQEEDTAEEMIDWLIKNGKLTVKEFRMKTAIMMSCKRAIKANHHLDEREAKALLKRLPQCENPFNCPHGRPVTVHFNDQDLEKMFKRIQDSHTPYADDFDDHEF.

This sequence belongs to the DNA mismatch repair MutL/HexB family.

This protein is involved in the repair of mismatches in DNA. It is required for dam-dependent methyl-directed DNA mismatch repair. May act as a 'molecular matchmaker', a protein that promotes the formation of a stable complex between two or more DNA-binding proteins in an ATP-dependent manner without itself being part of a final effector complex. The sequence is that of DNA mismatch repair protein MutL from Limosilactobacillus reuteri (strain DSM 20016) (Lactobacillus reuteri).